Here is a 437-residue protein sequence, read N- to C-terminus: Adenosylhomocysteinase (437 aa).

Positions 54, 125, and 170 each coordinate substrate. Residue 171 to 173 (TTT) participates in NAD(+) binding. 2 residues coordinate substrate: Lys-200 and Asp-204. Residues Asn-205, 234–239 (GYGWVG), Glu-258, Asn-293, 314–316 (AGH), and Asn-361 each bind NAD(+).

This sequence belongs to the adenosylhomocysteinase family. NAD(+) serves as cofactor.

The protein resides in the cytoplasm. It carries out the reaction S-adenosyl-L-homocysteine + H2O = L-homocysteine + adenosine. Its pathway is amino-acid biosynthesis; L-homocysteine biosynthesis; L-homocysteine from S-adenosyl-L-homocysteine: step 1/1. May play a key role in the regulation of the intracellular concentration of adenosylhomocysteine. The protein is Adenosylhomocysteinase of Pyrobaculum aerophilum (strain ATCC 51768 / DSM 7523 / JCM 9630 / CIP 104966 / NBRC 100827 / IM2).